Reading from the N-terminus, the 407-residue chain is Semenogelin-2 (407 aa).

Residues 1-23 (MKSIILFVLSLVLILEKQAAVMG) form the signal peptide. 4 disordered regions span residues 25–60 (KDGS…TKSK), 133–158 (GQAH…LSSQ), 173–192 (KEQA…GSQS), and 272–407 (NLNQ…NKIS). 3 stretches are compositionally biased toward polar residues: residues 31–40 (QLPSGSSQFP), 137–158 (CGTQ…LSSQ), and 174–192 (EQAS…GSQS). Basic and acidic residues predominate over residues 292–310 (RTEERQLNHGEKSVQKDVS). Over residues 325–334 (KSQNQVTIHS) the composition is skewed to polar residues. The span at 335 to 345 (QDQEHGHKENK) shows a compositional bias: basic and acidic residues. A compositionally biased stretch (polar residues) spans 372–397 (GSISIQTEEQIHGKSQNXVRIPSQAQ).

The protein belongs to the semenogelin family. In terms of assembly, interacts with SERPINA5.

The protein resides in the secreted. Its function is as follows. Participates in the formation of a gel matrix (sperm coagulum) entrapping the accessory gland secretions and ejaculated spermatozoa. In Pan troglodytes (Chimpanzee), this protein is Semenogelin-2 (SEMG2).